Consider the following 779-residue polypeptide: Mediator of RNA polymerase II transcription subunit 15 (779 aa).

Composition is skewed to polar residues over residues 70 to 90 (NKNQ…NQQG) and 98 to 108 (ALQTLATQGTR). Disordered stretches follow at residues 70 to 131 (NKNQ…GGNA), 209 to 407 (NPMQ…VPIG), 437 to 512 (FLRQ…NPQE), and 629 to 649 (PAKQ…TGSQ). Residues 114–130 (GQMGPGGPMGNQMGGGN) show a composition bias toward gly residues. 2 stretches are compositionally biased toward low complexity: residues 209-232 (NPMQ…QPQG) and 240-270 (PNQM…QMNQ). Residues 274 to 284 (SSGGNQMGNLG) show a composition bias toward gly residues. Low complexity-rich tracts occupy residues 285–295 (GNSPMNPGNMG), 304–329 (QQMP…QMNQ), and 339–350 (GPVQQQQQPGQV). Over residues 351–361 (GMAGMGPGGPG) the composition is skewed to gly residues. Composition is skewed to low complexity over residues 362-383 (NLQQ…APGQ), 393-402 (NMQAMGNQGN), and 451-468 (GPGS…IPSP). Composition is skewed to polar residues over residues 477–500 (QVSS…NTPG) and 640–649 (PSTSGSTGSQ).

This sequence belongs to the Mediator complex subunit 15 family. Component of the Mediator complex.

It is found in the nucleus. Functionally, component of the Mediator complex, a coactivator involved in the regulated transcription of nearly all RNA polymerase II-dependent genes. Mediator functions as a bridge to convey information from gene-specific regulatory proteins to the basal RNA polymerase II transcription machinery. Mediator is recruited to promoters by direct interactions with regulatory proteins and serves as a scaffold for the assembly of a functional preinitiation complex with RNA polymerase II and the general transcription factors. The chain is Mediator of RNA polymerase II transcription subunit 15 (MED15) from Aedes aegypti (Yellowfever mosquito).